The primary structure comprises 27 residues: Conotoxin (27 aa).

Intrachain disulfides connect Cys2-Cys16, Cys6-Cys18, and Cys12-Cys23. The residue at position 27 (Asn27) is an Asparagine amide.

As to expression, expressed by the venom duct.

The protein localises to the secreted. Probable neurotoxin that inhibits ion channels. This chain is Conotoxin, found in Conus amadis (Amadis cone).